A 1097-amino-acid polypeptide reads, in one-letter code: DNA-directed RNA polymerase subunit beta (1097 aa).

It belongs to the RNA polymerase beta chain family. As to quaternary structure, in plastids the minimal PEP RNA polymerase catalytic core is composed of four subunits: alpha, beta, beta', and beta''. When a (nuclear-encoded) sigma factor is associated with the core the holoenzyme is formed, which can initiate transcription.

It localises to the plastid. Its subcellular location is the chloroplast. It catalyses the reaction RNA(n) + a ribonucleoside 5'-triphosphate = RNA(n+1) + diphosphate. Its function is as follows. DNA-dependent RNA polymerase catalyzes the transcription of DNA into RNA using the four ribonucleoside triphosphates as substrates. This chain is DNA-directed RNA polymerase subunit beta, found in Rhodomonas salina (Cryptomonas salina).